We begin with the raw amino-acid sequence, 239 residues long: Phosphoribosylaminoimidazole-succinocarboxamide synthase (239 aa).

It belongs to the SAICAR synthetase family.

The catalysed reaction is 5-amino-1-(5-phospho-D-ribosyl)imidazole-4-carboxylate + L-aspartate + ATP = (2S)-2-[5-amino-1-(5-phospho-beta-D-ribosyl)imidazole-4-carboxamido]succinate + ADP + phosphate + 2 H(+). The protein operates within purine metabolism; IMP biosynthesis via de novo pathway; 5-amino-1-(5-phospho-D-ribosyl)imidazole-4-carboxamide from 5-amino-1-(5-phospho-D-ribosyl)imidazole-4-carboxylate: step 1/2. The polypeptide is Phosphoribosylaminoimidazole-succinocarboxamide synthase (Chlorobium luteolum (strain DSM 273 / BCRC 81028 / 2530) (Pelodictyon luteolum)).